Here is a 581-residue protein sequence, read N- to C-terminus: ATP-dependent lipid A-core flippase (581 aa).

6 consecutive transmembrane segments (helical) span residues 21–41 (TVAI…ALFI), 65–85 (FVVI…SYCL), 138–158 (ALLI…VMFY), 161–181 (WQLS…VTVV), 246–266 (LSVS…LWVV), and 271–291 (MIDT…MMLL). Residues 24–306 (IVAIIGMIGY…LANVNSDMQR (283 aa)) enclose the ABC transmembrane type-1 domain. An ABC transporter domain is found at 338-575 (IEVKNVTFKY…NGTYSALCKM (238 aa)). An ATP-binding site is contributed by 372–379 (GRSGSGKS).

The protein belongs to the ABC transporter superfamily. Lipid exporter (TC 3.A.1.106) family. Homodimer.

The protein resides in the cell inner membrane. It carries out the reaction ATP + H2O + lipid A-core oligosaccharideSide 1 = ADP + phosphate + lipid A-core oligosaccharideSide 2.. Its function is as follows. Involved in lipopolysaccharide (LPS) biosynthesis. Translocates lipid A-core from the inner to the outer leaflet of the inner membrane. Transmembrane domains (TMD) form a pore in the inner membrane and the ATP-binding domain (NBD) is responsible for energy generation. The sequence is that of ATP-dependent lipid A-core flippase from Pseudoalteromonas translucida (strain TAC 125).